Here is an 898-residue protein sequence, read N- to C-terminus: Probable LRR receptor-like serine/threonine-protein kinase At4g20450 (898 aa).

An N-terminal signal peptide occupies residues 1–24 (MEGIHKLIFLALIWIFLITNIVDA). At 25–535 (QDQQGFISLD…TGPGNNKKKL (511 aa)) the chain is on the extracellular side. Asn-40, Asn-52, Asn-98, Asn-247, Asn-253, Asn-420, Asn-443, Asn-465, Asn-484, and Asn-489 each carry an N-linked (GlcNAc...) asparagine glycan. 3 LRR repeats span residues 455 to 477 (QLQK…LAKM), 479 to 501 (LLTF…LLNM), and 505 to 526 (GLIT…ESET). A helical membrane pass occupies residues 536 to 556 (LVPILASAASVGIIIAVLLLV). The Cytoplasmic segment spans residues 557–898 (NILLLRKKKP…FGPEHIPDAR (342 aa)). A Phosphothreonine modification is found at Thr-582. The Protein kinase domain maps to 591-864 (NNFERPLGEG…QVANELQECL (274 aa)). ATP-binding positions include 597-605 (LGEGGFGVV) and Lys-619. Position 664 is a phosphotyrosine (Tyr-664). Asp-716 (proton acceptor) is an active-site residue. Position 750 is a phosphoserine (Ser-750). Residue Thr-751 is modified to Phosphothreonine. Tyr-764 carries the phosphotyrosine modification. The tract at residues 864 to 898 (LLTENSRKGGRHDVDSKSSLEQSTSFGPEHIPDAR) is disordered. Residues 868-881 (NSRKGGRHDVDSKS) are compositionally biased toward basic and acidic residues.

Belongs to the protein kinase superfamily. Ser/Thr protein kinase family.

Its subcellular location is the membrane. It carries out the reaction L-seryl-[protein] + ATP = O-phospho-L-seryl-[protein] + ADP + H(+). The enzyme catalyses L-threonyl-[protein] + ATP = O-phospho-L-threonyl-[protein] + ADP + H(+). The chain is Probable LRR receptor-like serine/threonine-protein kinase At4g20450 from Arabidopsis thaliana (Mouse-ear cress).